Consider the following 324-residue polypeptide: Nucleotide-binding protein GbCGDNIH1_0395 (324 aa).

An ATP-binding site is contributed by 14-21 (GLSGAGKS). Residue 59–62 (DARS) coordinates GTP. The tract at residues 286-324 (ISDDAPQAGAARVSTDDRNGRPEEHGSAQAPDELSRTTS) is disordered. Residues 299–311 (STDDRNGRPEEHG) are compositionally biased toward basic and acidic residues.

This sequence belongs to the RapZ-like family.

Its function is as follows. Displays ATPase and GTPase activities. This chain is Nucleotide-binding protein GbCGDNIH1_0395, found in Granulibacter bethesdensis (strain ATCC BAA-1260 / CGDNIH1).